The sequence spans 448 residues: ATP-dependent protease ATPase subunit HslU (448 aa).

ATP is bound by residues isoleucine 18, 60-65 (GVGKTE), aspartate 261, glutamate 326, and arginine 398.

Belongs to the ClpX chaperone family. HslU subfamily. In terms of assembly, a double ring-shaped homohexamer of HslV is capped on each side by a ring-shaped HslU homohexamer. The assembly of the HslU/HslV complex is dependent on binding of ATP.

The protein resides in the cytoplasm. ATPase subunit of a proteasome-like degradation complex; this subunit has chaperone activity. The binding of ATP and its subsequent hydrolysis by HslU are essential for unfolding of protein substrates subsequently hydrolyzed by HslV. HslU recognizes the N-terminal part of its protein substrates and unfolds these before they are guided to HslV for hydrolysis. The protein is ATP-dependent protease ATPase subunit HslU of Paraburkholderia xenovorans (strain LB400).